The chain runs to 273 residues: MLEHQTNTYQQNSTPALSAENLSIFYGDFKALKDISMRIPKNKVTAFIGPSGCGKSTLLRCFNRLNDLIDIFRLEGRILYHNQNIYDPDIDPVEIRRHIGMVFQKPNPFPKSIYDNIAYGVRVNGLAKSKEEMDEIVERSLRQAVLWDEVKDKLGQSGFALSGGQQQRLCIARAVAISPDVVLMDEPCASLDPISTVKVEELINELRQKYTIIIVTHNMQQATRIADLTAFFNAKAVESGQRFGYLVEFDKTNNIFQNPREKATQDYVSGRFG.

The ABC transporter domain maps to 17–259; the sequence is LSAENLSIFY…DKTNNIFQNP (243 aa). 49–56 contributes to the ATP binding site; sequence GPSGCGKS.

This sequence belongs to the ABC transporter superfamily. Phosphate importer (TC 3.A.1.7) family. As to quaternary structure, the complex is composed of two ATP-binding proteins (PstB), two transmembrane proteins (PstC and PstA) and a solute-binding protein (PstS).

Its subcellular location is the cell inner membrane. It carries out the reaction phosphate(out) + ATP + H2O = ADP + 2 phosphate(in) + H(+). Its function is as follows. Part of the ABC transporter complex PstSACB involved in phosphate import. Responsible for energy coupling to the transport system. This is Phosphate import ATP-binding protein PstB from Trichodesmium erythraeum (strain IMS101).